A 308-amino-acid polypeptide reads, in one-letter code: Polyprenal reductase (308 aa).

Over methionine 1–threonine 2 the chain is Cytoplasmic. The chain crosses the membrane as a helical span at residues leucine 3–leucine 23. Topologically, residues leucine 24–arginine 65 are lumenal. A helical membrane pass occupies residues cysteine 66 to leucine 86. Topologically, residues arginine 87–serine 120 are cytoplasmic. The chain crosses the membrane as a helical span at residues valine 121–phenylalanine 141. The Lumenal portion of the chain corresponds to valine 142 to glycine 148. A helical transmembrane segment spans residues valine 149 to valine 169. Residues leucine 170 to asparagine 184 are Cytoplasmic-facing. The chain crosses the membrane as a helical span at residues leucine 185–leucine 205. Residues histidine 206–serine 255 are Lumenal-facing. The chain crosses the membrane as a helical span at residues isoleucine 256 to leucine 276. Over asparagine 277–phenylalanine 308 the chain is Cytoplasmic.

The protein belongs to the steroid 5-alpha reductase family. Polyprenal reductase subfamily.

It is found in the endoplasmic reticulum membrane. It catalyses the reaction a di-trans,poly-cis-dolichal + NADP(+) = a di-trans,poly-cis-polyprenal + NADPH + H(+). The catalysed reaction is a 3-oxo-5alpha-steroid + NADP(+) = a 3-oxo-Delta(4)-steroid + NADPH + H(+). It carries out the reaction androst-4-ene-3,17-dione + NADPH + H(+) = 5alpha-androstan-3,17-dione + NADP(+). The enzyme catalyses 17beta-hydroxy-5alpha-androstan-3-one + NADP(+) = testosterone + NADPH + H(+). The protein operates within protein modification; protein glycosylation. Its function is as follows. Plays a key role in early steps of protein N-linked glycosylation by being involved in the conversion of polyprenol into dolichol. Acts as a polyprenal reductase that mediates the reduction of polyprenal into dolichal in a NADP-dependent mechanism. Dolichols are required for the synthesis of dolichol-linked monosaccharides and the oligosaccharide precursor used for N-glycosylation. Also able to convert testosterone (T) into 5-alpha-dihydrotestosterone (DHT). The polypeptide is Polyprenal reductase (srd5a3) (Xenopus tropicalis (Western clawed frog)).